Consider the following 246-residue polypeptide: MRSGVIARKVGMTRVFTDAGEHVPVTVLQIDQCQVVAHRTTEKDGYVALQVGVGKAKVKNVSQAERGRFAVAKVEPKKKLAEFRVSEDALIPVGAEITADHFIPGQFVDVTGTTTGKGFAGGMKRWNFGGLRATHGVSISHRSIGSTGGRQDPGKTFKNKKMPGHLGVERVTTQNLKVVRTDPERGLILVEGAVPGVAGGWIQVRDSVKRKLPADVPLPGKFRENGSAGASQVEAAPEAPASEENA.

Disordered stretches follow at residues 140–162 and 215–246; these read SHRS…NKKM and DVPL…EENA. The residue at position 151 (glutamine 151) is an N5-methylglutamine. Over residues 234-246 the composition is skewed to low complexity; it reads EAAPEAPASEENA.

This sequence belongs to the universal ribosomal protein uL3 family. Part of the 50S ribosomal subunit. Forms a cluster with proteins L14 and L19. In terms of processing, methylated by PrmB.

In terms of biological role, one of the primary rRNA binding proteins, it binds directly near the 3'-end of the 23S rRNA, where it nucleates assembly of the 50S subunit. This is Large ribosomal subunit protein uL3 from Methylorubrum populi (strain ATCC BAA-705 / NCIMB 13946 / BJ001) (Methylobacterium populi).